We begin with the raw amino-acid sequence, 228 residues long: Ephrin-A5 (228 aa).

An N-terminal signal peptide occupies residues 1–20; it reads MLHVEMLTLVFLVLWMCVFS. One can recognise an Ephrin RBD domain in the interval 29–162; that stretch reads ADRYAVYWNS…KLKVFVRPTN (134 aa). N-linked (GlcNAc...) asparagine glycosylation occurs at Asn-37. Intrachain disulfides connect Cys-62–Cys-102 and Cys-90–Cys-151. A disordered region spans residues 186–205; that stretch reads EPADDTVHESAEPSRGENAA. Basic and acidic residues predominate over residues 190–200; the sequence is DTVHESAEPSR. The GPI-anchor amidated asparagine moiety is linked to residue Asn-203. Residues 204 to 228 constitute a propeptide, removed in mature form; the sequence is AAQTPRIPSRLLAILLFLLAMLLTL.

Belongs to the ephrin family. Binds to EPHB2. Interacts with EPHA8; activates EPHA8. Binds to the receptor tyrosine kinases EPHA2, EPHA3 and EPHB1. Forms a ternary EFNA5-EPHA3-ADAM10 complex mediating EFNA5 extracellular domain shedding by ADAM10 which regulates the EFNA5-EPHA3 complex internalization and function.

The protein localises to the cell membrane. It localises to the membrane. It is found in the caveola. Functionally, cell surface GPI-bound ligand for Eph receptors, a family of receptor tyrosine kinases which are crucial for migration, repulsion and adhesion during neuronal, vascular and epithelial development. Binds promiscuously Eph receptors residing on adjacent cells, leading to contact-dependent bidirectional signaling into neighboring cells. The signaling pathway downstream of the receptor is referred to as forward signaling while the signaling pathway downstream of the ephrin ligand is referred to as reverse signaling. Induces compartmentalized signaling within a caveolae-like membrane microdomain when bound to the extracellular domain of its cognate receptor. This signaling event requires the activity of the Fyn tyrosine kinase. Activates the EPHA3 receptor to regulate cell-cell adhesion and cytoskeletal organization. With the receptor EPHA2 may regulate lens fiber cells shape and interactions and be important for lens transparency maintenance. May function actively to stimulate axon fasciculation. The interaction of EFNA5 with EPHA5 also mediates communication between pancreatic islet cells to regulate glucose-stimulated insulin secretion. Cognate/functional ligand for EPHA7, their interaction regulates brain development modulating cell-cell adhesion and repulsion. The chain is Ephrin-A5 (EFNA5) from Homo sapiens (Human).